A 249-amino-acid chain; its full sequence is tRNA pseudouridine synthase A (249 aa).

D52 acts as the Nucleophile in catalysis. Y111 is a substrate binding site.

It belongs to the tRNA pseudouridine synthase TruA family. In terms of assembly, homodimer.

It carries out the reaction uridine(38/39/40) in tRNA = pseudouridine(38/39/40) in tRNA. Its function is as follows. Formation of pseudouridine at positions 38, 39 and 40 in the anticodon stem and loop of transfer RNAs. The protein is tRNA pseudouridine synthase A of Maricaulis maris (strain MCS10) (Caulobacter maris).